Reading from the N-terminus, the 283-residue chain is Phosphatidylglycerol--prolipoprotein diacylglyceryl transferase (283 aa).

7 consecutive transmembrane segments (helical) span residues 18-38, 62-82, 106-126, 136-156, 190-210, 218-238, and 252-272; these read LGGIEVHWYGLAYACAIVVAF, YFLWAELGIVLGARIGYVLIY, FIGIRGMSYHGGLVGFLIASY, LLIYLDLIAISLPLGYVFGRI, PSQLIEAFLEGVVVFLMVMWA, GLLIVVYGLGYSLMRFIAEFY, and LSMGQILSVFMVIVSLGILLY. An a 1,2-diacyl-sn-glycero-3-phospho-(1'-sn-glycerol)-binding site is contributed by Arg-155.

Belongs to the Lgt family.

The protein localises to the cell inner membrane. The catalysed reaction is L-cysteinyl-[prolipoprotein] + a 1,2-diacyl-sn-glycero-3-phospho-(1'-sn-glycerol) = an S-1,2-diacyl-sn-glyceryl-L-cysteinyl-[prolipoprotein] + sn-glycerol 1-phosphate + H(+). It participates in protein modification; lipoprotein biosynthesis (diacylglyceryl transfer). Its function is as follows. Catalyzes the transfer of the diacylglyceryl group from phosphatidylglycerol to the sulfhydryl group of the N-terminal cysteine of a prolipoprotein, the first step in the formation of mature lipoproteins. This Helicobacter pylori (strain J99 / ATCC 700824) (Campylobacter pylori J99) protein is Phosphatidylglycerol--prolipoprotein diacylglyceryl transferase.